The chain runs to 87 residues: Beta-mammal toxin Css4 (87 aa).

A signal peptide spans 1-19 (MNSLLMITACLALVGTVWA). The region spanning 20 to 85 (KEGYLVNSYT…VWPLPNKTCN (66 aa)) is the LCN-type CS-alpha/beta domain. Disulfide bonds link Cys-31–Cys-84, Cys-35–Cys-60, Cys-44–Cys-65, and Cys-48–Cys-67. An Asparagine amide modification is found at Asn-85.

Belongs to the long (4 C-C) scorpion toxin superfamily. Sodium channel inhibitor family. Beta subfamily. Expressed by the venom gland.

The protein localises to the secreted. Its function is as follows. Beta toxins bind voltage-independently at site-4 of sodium channels (Nav) and shift the voltage of activation toward more negative potentials thereby affecting sodium channel activation and promoting spontaneous and repetitive firing. This toxin is active only on mammals. This chain is Beta-mammal toxin Css4, found in Centruroides suffusus (Durango bark scorpion).